The primary structure comprises 210 residues: Protein GET1 (210 aa).

Topologically, residues 1–4 are lumenal; that stretch reads MPSL. The chain crosses the membrane as a helical span at residues 5 to 24; it reads LIIVLIIHVVTYLINTIGAN. The Cytoplasmic segment spans residues 25-110; the sequence is TIDSLLWLLY…SFDLAVKSIR (86 aa). The stretch at 39–95 forms a coiled coil; that stretch reads NQTSQTANEQRRLKREVMQLKREMNATSSQDEFAKWAKLRRRHDKTMEEYEAKNKAL. Residues 111 to 131 form a helical membrane-spanning segment; it reads FFSTTGLKLFLQFWCSKTPIF. At 132 to 155 the chain is on the lumenal side; it reads ELPRGWIPWQVEWVLSFPRAPLGT. Residues 156 to 172 form a helical membrane-spanning segment; sequence VSIQIWGGVCATVVSLA. Residues 173–210 are Cytoplasmic-facing; it reads GDAIGVVNVYLTSKAPKQKEPATSGENSARPMAIKKEL. The interval 189–210 is disordered; it reads KQKEPATSGENSARPMAIKKEL.

Belongs to the WRB/GET1 family. As to quaternary structure, interacts with GET3.

The protein localises to the endoplasmic reticulum membrane. Functionally, required for the post-translational delivery of tail-anchored (TA) proteins to the endoplasmic reticulum. Acts as a membrane receptor for soluble GET3, which recognizes and selectively binds the transmembrane domain of TA proteins in the cytosol. This chain is Protein GET1, found in Coccidioides immitis (strain RS) (Valley fever fungus).